The primary structure comprises 134 residues: MENKKTIYFLCTGNSCRSQMAEAWGKKYLGDNWNVYSAGIEAHGVNPNAIKAMNEVNIDITNQTSDIIDANILNRADLVVTLCSHADSVCPSTPPDVNRVHWGFDDPAGKEWSEFQRVRDEIGERIKRFSETGE.

Catalysis depends on nucleophile residues C11, C83, and C90. Cystine bridges form between C11-C83 and C83-C90.

Belongs to the low molecular weight phosphotyrosine protein phosphatase family. Thioredoxin-coupled ArsC subfamily.

It localises to the cytoplasm. It carries out the reaction arsenate + [thioredoxin]-dithiol + H(+) = arsenite + [thioredoxin]-disulfide + H2O. Catalyzes the reduction of arsenate [As(V)] to arsenite [As(III)]. This is Arsenate reductase from Bacillus cereus (strain AH187).